The chain runs to 215 residues: MKYQLTALEARVIGCLLEKQVTTPEQYPLSVNGVVTACNQKTNREPVMNLSESEVQEQLDNLVKRHYLRTVSGFGNRVTKYEQRFCNSEFGDLKLSAAEVALITTLLLRGAQTPGELRSRAARMYEFSDMAEVELTLEQLANREDGPFVVRLAREPGKRESRYMHLFSGEVEDQPAVTDMSNAVDGDLQARVEALEIEVAELKQRLDSLLAHLGD.

Lys-80 carries the post-translational modification N6-acetyllysine.

Belongs to the UPF0502 family.

The protein is UPF0502 protein YceH of Escherichia coli O157:H7.